Consider the following 163-residue polypeptide: Inorganic pyrophosphatase (163 aa).

Substrate is bound by residues Lys-21, Arg-35, and Tyr-47. Mg(2+) is bound by residues Asp-57, Asp-62, and Asp-94. Tyr-131 is a binding site for substrate.

Belongs to the PPase family. In terms of assembly, homohexamer. Mg(2+) is required as a cofactor.

It localises to the cytoplasm. It carries out the reaction diphosphate + H2O = 2 phosphate + H(+). Catalyzes the hydrolysis of inorganic pyrophosphate (PPi) forming two phosphate ions. The protein is Inorganic pyrophosphatase of Halalkalibacterium halodurans (strain ATCC BAA-125 / DSM 18197 / FERM 7344 / JCM 9153 / C-125) (Bacillus halodurans).